Here is a 444-residue protein sequence, read N- to C-terminus: ATP-dependent protease ATPase subunit HslU (444 aa).

ATP-binding positions include Ile20 and 62 to 67 (GVGKTE). Residues 130–158 (EDRILDALVPPPRGASGEPERGEDNSARQ) form a disordered region. ATP contacts are provided by Asp257, Glu322, and Arg394.

The protein belongs to the ClpX chaperone family. HslU subfamily. In terms of assembly, a double ring-shaped homohexamer of HslV is capped on each side by a ring-shaped HslU homohexamer. The assembly of the HslU/HslV complex is dependent on binding of ATP.

The protein resides in the cytoplasm. Its function is as follows. ATPase subunit of a proteasome-like degradation complex; this subunit has chaperone activity. The binding of ATP and its subsequent hydrolysis by HslU are essential for unfolding of protein substrates subsequently hydrolyzed by HslV. HslU recognizes the N-terminal part of its protein substrates and unfolds these before they are guided to HslV for hydrolysis. This Bordetella bronchiseptica (strain ATCC BAA-588 / NCTC 13252 / RB50) (Alcaligenes bronchisepticus) protein is ATP-dependent protease ATPase subunit HslU.